A 429-amino-acid chain; its full sequence is Probable proton-coupled zinc antiporter SLC30A4 (429 aa).

The Cytoplasmic portion of the chain corresponds to 1–113 (MAGSGAWKRL…ILKQRKVKAR (113 aa)). Residues 114–134 (LTIAAVLYLLFMIGELVGGYI) traverse the membrane as a helical segment. Residues 135-143 (ANSLAIMTD) are Lumenal-facing. Residues 144-164 (ALHMLTDLSAIILTLLALWLS) form a helical membrane-spanning segment. H146 and D150 together coordinate Zn(2+). The Cytoplasmic segment spans residues 165 to 178 (SKSPTKRFTFGFHR). The chain crosses the membrane as a helical span at residues 179–199 (LEVLSAMISVLLVYILMGFLL). The Lumenal portion of the chain corresponds to 200-216 (YEAVQRTIHMNYEINGD). A helical membrane pass occupies residues 217-237 (IMLITAAVGVAVNVIMGFLLN). Topologically, residues 238 to 274 (QSGHRHSHSHSLPSNSPTRGSGCERNHGQDSLAVRAA) are cytoplasmic. A zinc binding region spans residues 240–264 (GHRHSHSHSLPSNSPTRGSGCERNH). Residues 275–295 (FVHALGDLVQSVGVLIAAYII) form a helical membrane-spanning segment. H277 and D281 together coordinate Zn(2+). The Lumenal segment spans residues 296–310 (RFKPEYKIADPICTY). The chain crosses the membrane as a helical span at residues 311–331 (VFSLLVAFTTFRIIWDTVVII). Over 332–429 (LEGVPSHLNV…TCANCQSSSP (98 aa)) the chain is Cytoplasmic.

Belongs to the cation diffusion facilitator (CDF) transporter (TC 2.A.4) family. SLC30A subfamily. In terms of assembly, homodimer; dityrosine-linked. Homodimerization could be specific of the human protein and enhances the zinc transport efficiency. Interacts with TMEM163. In terms of processing, homodimerization through dityrosine bonds is stimulated by oxidative stress.

Its subcellular location is the endosome membrane. The protein localises to the late endosome membrane. It localises to the lysosome membrane. The enzyme catalyses Zn(2+)(in) + 2 H(+)(out) = Zn(2+)(out) + 2 H(+)(in). Probable proton-coupled zinc ion antiporter mediating zinc import from cytoplasm potentially into the endocytic compartment. Controls zinc deposition in milk. The sequence is that of Probable proton-coupled zinc antiporter SLC30A4 from Homo sapiens (Human).